Here is a 21-residue protein sequence, read N- to C-terminus: Cupiennin-6d (21 aa).

Ser-21 carries the serine amide modification.

As to expression, expressed by the venom gland.

Its subcellular location is the secreted. This chain is Cupiennin-6d, found in Cupiennius salei (American wandering spider).